We begin with the raw amino-acid sequence, 100 residues long: NADH-quinone oxidoreductase subunit K (100 aa).

The next 3 membrane-spanning stretches (helical) occupy residues 4-24, 29-49, and 60-80; these read LNYG…SLLI, IFIL…FILI, and VLYI…LAIF.

Belongs to the complex I subunit 4L family. NDH-1 is composed of 13 different subunits. Subunits NuoA, H, J, K, L, M, N constitute the membrane sector of the complex.

It localises to the cell membrane. The catalysed reaction is a quinone + NADH + 5 H(+)(in) = a quinol + NAD(+) + 4 H(+)(out). Functionally, NDH-1 shuttles electrons from NADH, via FMN and iron-sulfur (Fe-S) centers, to quinones in the respiratory chain. The immediate electron acceptor for the enzyme in this species is believed to be ubiquinone. Couples the redox reaction to proton translocation (for every two electrons transferred, four hydrogen ions are translocated across the cytoplasmic membrane), and thus conserves the redox energy in a proton gradient. This Buchnera aphidicola subsp. Cinara cedri (strain Cc) protein is NADH-quinone oxidoreductase subunit K.